Here is a 631-residue protein sequence, read N- to C-terminus: Chaperone protein HtpG (631 aa).

Positions 1-339 (MSAQKETLGF…SNDLPLNVSR (339 aa)) are a; substrate-binding. Residues 340-556 (EILQESKDID…EHDMSAHLER (217 aa)) are b. The interval 557-631 (MLKAAGQKIE…INKLMLELSV (75 aa)) is c.

This sequence belongs to the heat shock protein 90 family. In terms of assembly, homodimer.

It localises to the cytoplasm. Its function is as follows. Molecular chaperone. Has ATPase activity. The chain is Chaperone protein HtpG from Chromobacterium violaceum (strain ATCC 12472 / DSM 30191 / JCM 1249 / CCUG 213 / NBRC 12614 / NCIMB 9131 / NCTC 9757 / MK).